Consider the following 607-residue polypeptide: Probable Ufm1-specific protease 2 (607 aa).

Residues Cys-440, Asp-564, and His-566 contribute to the active site.

Belongs to the peptidase C78 family.

In terms of biological role, thiol protease which recognizes and hydrolyzes the peptide bond at the C-terminal Gly of UFM1, a ubiquitin-like modifier protein bound to a number of target proteins. Does not hydrolyze SUMO1 or ISG15 ubiquitin-like proteins. In Drosophila melanogaster (Fruit fly), this protein is Probable Ufm1-specific protease 2.